The chain runs to 494 residues: UDP-N-acetylmuramate--L-alanine ligase (494 aa).

ATP is bound at residue 140–146; that stretch reads GTHGKTT.

It belongs to the MurCDEF family.

It is found in the cytoplasm. The enzyme catalyses UDP-N-acetyl-alpha-D-muramate + L-alanine + ATP = UDP-N-acetyl-alpha-D-muramoyl-L-alanine + ADP + phosphate + H(+). Its pathway is cell wall biogenesis; peptidoglycan biosynthesis. Cell wall formation. The sequence is that of UDP-N-acetylmuramate--L-alanine ligase from Trichormus variabilis (strain ATCC 29413 / PCC 7937) (Anabaena variabilis).